We begin with the raw amino-acid sequence, 156 residues long: Small ribosomal subunit protein uS7 (156 aa).

It belongs to the universal ribosomal protein uS7 family. As to quaternary structure, part of the 30S ribosomal subunit. Contacts proteins S9 and S11.

Functionally, one of the primary rRNA binding proteins, it binds directly to 16S rRNA where it nucleates assembly of the head domain of the 30S subunit. Is located at the subunit interface close to the decoding center, probably blocks exit of the E-site tRNA. This chain is Small ribosomal subunit protein uS7, found in Clostridium tetani (strain Massachusetts / E88).